A 549-amino-acid polypeptide reads, in one-letter code: Glucose-6-phosphate isomerase (549 aa).

Glu353 (proton donor) is an active-site residue. Catalysis depends on residues His384 and Lys513.

The protein belongs to the GPI family.

Its subcellular location is the cytoplasm. It catalyses the reaction alpha-D-glucose 6-phosphate = beta-D-fructose 6-phosphate. The protein operates within carbohydrate biosynthesis; gluconeogenesis. Its pathway is carbohydrate degradation; glycolysis; D-glyceraldehyde 3-phosphate and glycerone phosphate from D-glucose: step 2/4. In terms of biological role, catalyzes the reversible isomerization of glucose-6-phosphate to fructose-6-phosphate. This chain is Glucose-6-phosphate isomerase, found in Brucella melitensis biotype 2 (strain ATCC 23457).